Here is a 380-residue protein sequence, read N- to C-terminus: Cytochrome b (380 aa).

The next 4 helical transmembrane spans lie at 34–54 (FGSL…LLAT), 78–99 (WLIR…YLHI), 114–134 (WNTG…GYVL), and 179–199 (FFAL…IHLT). Heme b is bound by residues His84 and His98. Residues His183 and His197 each contribute to the heme b site. Residue His202 coordinates a ubiquinone. A run of 4 helical transmembrane segments spans residues 227 to 247 (LKDI…ALFS), 289 to 309 (LGGV…PLLH), 321 to 341 (LSQF…WVGS), and 348 to 368 (FIII…LLFP).

Belongs to the cytochrome b family. As to quaternary structure, the cytochrome bc1 complex contains 11 subunits: 3 respiratory subunits (MT-CYB, CYC1 and UQCRFS1), 2 core proteins (UQCRC1 and UQCRC2) and 6 low-molecular weight proteins (UQCRH/QCR6, UQCRB/QCR7, UQCRQ/QCR8, UQCR10/QCR9, UQCR11/QCR10 and a cleavage product of UQCRFS1). This cytochrome bc1 complex then forms a dimer. Requires heme b as cofactor.

The protein resides in the mitochondrion inner membrane. Its function is as follows. Component of the ubiquinol-cytochrome c reductase complex (complex III or cytochrome b-c1 complex) that is part of the mitochondrial respiratory chain. The b-c1 complex mediates electron transfer from ubiquinol to cytochrome c. Contributes to the generation of a proton gradient across the mitochondrial membrane that is then used for ATP synthesis. This is Cytochrome b (MT-CYB) from Pinguinus impennis (Great auk).